A 90-amino-acid chain; its full sequence is DNA-directed RNA polymerase subunit omega (90 aa).

It belongs to the RNA polymerase subunit omega family. The RNAP catalytic core consists of 2 alpha, 1 beta, 1 beta' and 1 omega subunit. When a sigma factor is associated with the core the holoenzyme is formed, which can initiate transcription.

The catalysed reaction is RNA(n) + a ribonucleoside 5'-triphosphate = RNA(n+1) + diphosphate. Functionally, promotes RNA polymerase assembly. Latches the N- and C-terminal regions of the beta' subunit thereby facilitating its interaction with the beta and alpha subunits. The protein is DNA-directed RNA polymerase subunit omega of Rhodopirellula baltica (strain DSM 10527 / NCIMB 13988 / SH1).